A 145-amino-acid polypeptide reads, in one-letter code: 3-dehydroquinate dehydratase (145 aa).

Tyr-23 (proton acceptor) is an active-site residue. The substrate site is built by Asn-75, His-81, and Asp-88. His-101 acts as the Proton donor in catalysis. Substrate is bound by residues 102–103 and Arg-112; that span reads IS.

It belongs to the type-II 3-dehydroquinase family. As to quaternary structure, homododecamer.

It carries out the reaction 3-dehydroquinate = 3-dehydroshikimate + H2O. The protein operates within metabolic intermediate biosynthesis; chorismate biosynthesis; chorismate from D-erythrose 4-phosphate and phosphoenolpyruvate: step 3/7. Catalyzes a trans-dehydration via an enolate intermediate. This Caldicellulosiruptor saccharolyticus (strain ATCC 43494 / DSM 8903 / Tp8T 6331) protein is 3-dehydroquinate dehydratase.